The chain runs to 117 residues: Small ribosomal subunit protein bS6 (117 aa).

Residues 96–117 (KEAAAPAPKAAPVESAPAVEAE) are disordered. Residues 99–117 (AAPAPKAAPVESAPAVEAE) are compositionally biased toward low complexity.

It belongs to the bacterial ribosomal protein bS6 family.

In terms of biological role, binds together with bS18 to 16S ribosomal RNA. The polypeptide is Small ribosomal subunit protein bS6 (Geobacter sulfurreducens (strain ATCC 51573 / DSM 12127 / PCA)).